A 571-amino-acid chain; its full sequence is Ferroportin (571 aa).

The Cytoplasmic portion of the chain corresponds to 1–23; the sequence is MTRAGDHNRQRGCCGSLADYLTS. Residues 24–53 traverse the membrane as a helical segment; it reads AKFLLYLGHSLSTWGDRMWHFAVSVFLVEL. Aspartate 39 and histidine 43 together coordinate Fe cation. Residues 54–57 lie on the Extracellular side of the membrane; it reads YGNS. The helical transmembrane segment at 58–84 threads the bilayer; the sequence is LLLTAVYGLVVAGSVLVLGAIIGDWVD. At 85-87 the chain is on the cytoplasmic side; sequence KNA. A helical transmembrane segment spans residues 88–118; it reads RLKVAQTSLVVQNVSVILCGIILMMVFLHKH. Residues 119 to 126 are Extracellular-facing; it reads ELLTMYHG. A helical membrane pass occupies residues 127–162; it reads WVLTSCYILIITIANIANLASTATAITIQRDWIVVV. Residues 163–164 are Cytoplasmic-facing; it reads AG. The chain crosses the membrane as a helical span at residues 165–195; sequence EDRSKLANMNATIRRIDQLTNILAPMAVGQI. Topologically, residues 196 to 202 are extracellular; sequence MTFGSPV. A helical transmembrane segment spans residues 203 to 229; that stretch reads IGCGFISGWNLVSMCVEYVLLWKVYQK. The Cytoplasmic portion of the chain corresponds to 230–306; it reads TPALAVKAGL…DGWVSYYNQP (77 aa). The helical transmembrane segment at 307–333 threads the bilayer; that stretch reads VFLAGMGLAFLYMTVLGFDCITTGYAY. Cysteine 326 is a Fe cation binding site. Topologically, residues 334-338 are extracellular; sequence TQGLS. A helical transmembrane segment spans residues 339–366; the sequence is GSILSILMGASAITGIMGTVAFTWLRRK. Residues 367-368 lie on the Cytoplasmic side of the membrane; the sequence is CG. The chain crosses the membrane as a helical span at residues 369–391; that stretch reads LVRTGLISGLAQLSCLILCVISV. The Extracellular segment spans residues 392-453; the sequence is FMPGSPLDLS…ETSPESVPII (62 aa). Residue asparagine 434 is glycosylated (N-linked (GlcNAc...) asparagine). The helical transmembrane segment at 454 to 483 threads the bilayer; it reads SVSLLFAGVIAARIGLWSFDLTVTQLLQEN. Topologically, residues 484 to 488 are cytoplasmic; the sequence is VIESE. A helical transmembrane segment spans residues 489–513; that stretch reads RGIINGVQNSMNYLLDLLHFIMVIL. A Fe cation-binding site is contributed by histidine 507. The Extracellular segment spans residues 514-516; it reads APN. Residues 517 to 542 traverse the membrane as a helical segment; it reads PEAFGLLVLISVSFVAMGHIMYFRFA. Topologically, residues 543-571 are cytoplasmic; sequence QNTLGNKLFACGPDAKEVRKENQANTSVV.

This sequence belongs to the ferroportin (FP) (TC 2.A.100) family. SLC40A subfamily. In terms of assembly, identified in a complex with STOM. Interacts with HAMP; affinity of the peptide hormone HAMP for SLC40A1 increases by 80-fold in the presence of iron and the interaction promotes SLC40A1 ubiquitination and degradation. Part of a complex composed of SLC40A1/ferroportin, TF/transferrin and HEPH/hephaestin that transfers iron from cells to transferrin. In terms of processing, polyubiquitinated by RNF217; leading to proteasomal degradation. Under conditions of high systemic iron levels, both the hormone peptide hepcidin/HAMP and holo(iron bound)-transferrin/TF induce the ubiquitination, internalization and proteasomal degradation of SLC40A1 to control iron release from cells. As to expression, detected in erythrocytes (at protein level). Expressed in placenta, intestine, muscle and spleen. Highly expressed in mature red blood.

The protein localises to the cell membrane. It is found in the basolateral cell membrane. The enzyme catalyses Fe(2+)(in) = Fe(2+)(out). Transports Fe(2+) from the inside of a cell to the outside of the cell, playing a key role for maintaining systemic iron homeostasis. Transports iron from intestinal, splenic, hepatic cells, macrophages and erythrocytes into the blood to provide iron to other tissues. Controls therefore dietary iron uptake, iron recycling by macrophages and erythrocytes, and release of iron stores in hepatocytes. When iron is in excess in serum, circulating HAMP/hepcidin levels increase resulting in a degradation of SLC40A1, thus limiting the iron efflux to plasma. In Homo sapiens (Human), this protein is Ferroportin.